The following is a 273-amino-acid chain: Large ribosomal subunit protein uL2cz/uL2cy (273 aa).

Disordered regions lie at residues M1–N25 and P225–L253.

The protein belongs to the universal ribosomal protein uL2 family. As to quaternary structure, part of the 50S ribosomal subunit.

It localises to the plastid. The protein resides in the chloroplast. In Triticum aestivum (Wheat), this protein is Large ribosomal subunit protein uL2cz/uL2cy (rpl2-A).